A 318-amino-acid polypeptide reads, in one-letter code: MMIKLGIVMDPISSINIKKDSSFAMMLEAQRRGWEIHYMEMNDLHLDQGVAIADTKVVQLKEDPNGWYEFTSEQTIELSELDAVLMRKDPPFDTEYIYATYILERAEEQGTLIVNKPQSLRDCNEKLFTAWFPELTPTTIVTRKAEKIKAFRQEHGDIILKPLDGMGGASIFRVKENDPNVSVIIETLTNHGQNYAMAQTFVPDISNGDKRILVVDGEPMPYCLARIPAKGETRGNLAAGGSGEPRPLSETDLKIANAVAPTLKEKGLIFVGLDVIGDKLTEINVTSPTCIREIEAAFDISITGKLMDAIERRLQAQA.

Residues 125–311 (EKLFTAWFPE…ITGKLMDAIE (187 aa)) enclose the ATP-grasp domain. Residue 151 to 208 (FRQEHGDIILKPLDGMGGASIFRVKENDPNVSVIIETLTNHGQNYAMAQTFVPDISNG) coordinates ATP. Residues Glu282 and Asn284 each contribute to the Mg(2+) site.

This sequence belongs to the prokaryotic GSH synthase family. The cofactor is Mg(2+). It depends on Mn(2+) as a cofactor.

It carries out the reaction gamma-L-glutamyl-L-cysteine + glycine + ATP = glutathione + ADP + phosphate + H(+). Its pathway is sulfur metabolism; glutathione biosynthesis; glutathione from L-cysteine and L-glutamate: step 2/2. In Vibrio vulnificus (strain YJ016), this protein is Glutathione synthetase.